The primary structure comprises 154 residues: Small ribosomal subunit protein bS6 (154 aa).

Positions 94 to 154 (VKQEGPLPTP…SSQGKESQKS (61 aa)) are disordered. Positions 103 to 112 (PRSSNKGYNQ) are enriched in polar residues. The segment covering 113-139 (SEKKDIESIDSTNKSEFKEEANDKKTA) has biased composition (basic and acidic residues). The span at 140 to 154 (TSESTSSQGKESQKS) shows a compositional bias: polar residues.

The protein belongs to the bacterial ribosomal protein bS6 family.

Functionally, binds together with bS18 to 16S ribosomal RNA. The protein is Small ribosomal subunit protein bS6 of Prochlorococcus marinus subsp. pastoris (strain CCMP1986 / NIES-2087 / MED4).